Consider the following 552-residue polypeptide: Lon protease 2 (552 aa).

97 to 104 (GPPGVGKT) contributes to the ATP binding site. The 187-residue stretch at 349–535 (EPQVGIVNGL…QEVLDEILVN (187 aa)) folds into the Lon proteolytic domain. Catalysis depends on residues serine 445 and lysine 488.

The protein belongs to the peptidase S16 family. In terms of assembly, homohexamer. Organized in a ring with a central cavity.

The protein resides in the cytoplasm. It carries out the reaction Hydrolysis of proteins in presence of ATP.. Its function is as follows. ATP-dependent serine protease that mediates the selective degradation of mutant and abnormal proteins as well as certain short-lived regulatory proteins. Required for cellular homeostasis and for survival from DNA damage and developmental changes induced by stress. Degrades polypeptides processively to yield small peptide fragments that are 5 to 10 amino acids long. Binds to DNA in a double-stranded, site-specific manner. This chain is Lon protease 2 (lon2), found in Bacillus subtilis (strain 168).